A 118-amino-acid polypeptide reads, in one-letter code: Small ribosomal subunit protein uS13 (118 aa).

Residues Ser94 to Lys118 are disordered.

The protein belongs to the universal ribosomal protein uS13 family. As to quaternary structure, part of the 30S ribosomal subunit. Forms a loose heterodimer with protein S19. Forms two bridges to the 50S subunit in the 70S ribosome.

In terms of biological role, located at the top of the head of the 30S subunit, it contacts several helices of the 16S rRNA. In the 70S ribosome it contacts the 23S rRNA (bridge B1a) and protein L5 of the 50S subunit (bridge B1b), connecting the 2 subunits; these bridges are implicated in subunit movement. Contacts the tRNAs in the A and P-sites. The polypeptide is Small ribosomal subunit protein uS13 (Buchnera aphidicola subsp. Acyrthosiphon pisum (strain 5A)).